We begin with the raw amino-acid sequence, 511 residues long: MEEFQRYIELDRSWQYNFFYPLIFQEYIYGFAYDHGLNKSILLENAGDKKYSLLIVKRLITRMYQQNHLSLSANHSNQNDFFGHKHKKNLYYQIISEGFAVIVEIPFSLLLISYLEAKEKKIVKSHNLQSIHSIFPFFEDKFLHLNFLLEILIPYPIHLEILVQTLRYWVKDASSLHLLRFFLYEYRNWNSLITPQKSISFFSKRNQRLFLFLYNFYVCEYESIFLFLCNQSSHLRSTSFGALLERIYFYGKLEYLVKVKTFTNTQDFRVILWLFKDPFLHYVRYRGKSILASKGTSLLMHKWKYYLINFWQCHFSLWSQPRRIYINRLSKHSLDFMGFFSSVRLNSSVVRSQMVENSFLIDNPIKKFDTIVRIIPLVGSLAKAKFCTVLGHPISKSVWTDLLDSDIIDRFGRICRNLSHYYSGSSRKKSLYRIKYILRLSCARTLARKHKSTVRAFLKRLGSEFLEEFFTEEEKVLSLILPRDSSISRGLYRGPFWYLDIICIHDLANYE.

Belongs to the intron maturase 2 family. MatK subfamily.

It localises to the plastid. It is found in the chloroplast. Usually encoded in the trnK tRNA gene intron. Probably assists in splicing its own and other chloroplast group II introns. This chain is Maturase K, found in Maihuenia poeppigii (Hardy cactus).